We begin with the raw amino-acid sequence, 81 residues long: Ferredoxin (81 aa).

A 4Fe-4S ferredoxin-type domain is found at 2-30 (KYTIVDKETCIACGACGAAAPDIYDYDED). Cysteine 11, cysteine 14, cysteine 17, and cysteine 61 together coordinate [4Fe-4S] cluster.

[4Fe-4S] cluster serves as cofactor.

Ferredoxins are iron-sulfur proteins that transfer electrons in a wide variety of metabolic reactions. This Geobacillus stearothermophilus (Bacillus stearothermophilus) protein is Ferredoxin (fer).